Reading from the N-terminus, the 427-residue chain is ATP synthase subunit beta (427 aa).

160–167 (GGAGVGKT) serves as a coordination point for ATP.

Belongs to the ATPase alpha/beta chains family. As to quaternary structure, F-type ATPases have 2 components, CF(1) - the catalytic core - and CF(0) - the membrane proton channel. CF(1) has five subunits: alpha(3), beta(3), gamma(1), delta(1), epsilon(1). CF(0) has three main subunits: a(1), b(2) and c(9-12). The alpha and beta chains form an alternating ring which encloses part of the gamma chain. CF(1) is attached to CF(0) by a central stalk formed by the gamma and epsilon chains, while a peripheral stalk is formed by the delta and b chains.

It localises to the cell membrane. The enzyme catalyses ATP + H2O + 4 H(+)(in) = ADP + phosphate + 5 H(+)(out). In terms of biological role, produces ATP from ADP in the presence of a proton gradient across the membrane. The catalytic sites are hosted primarily by the beta subunits. The sequence is that of ATP synthase subunit beta from Peptococcus niger.